Here is a 309-residue protein sequence, read N- to C-terminus: Taste receptor type 2 member 31 (309 aa).

Residues 1–2 (MT) are Extracellular-facing. Residues 3-23 (TFIPIIFSSLVVVIFVIGNFA) form a helical membrane-spanning segment. Residues 24 to 55 (NGFIALVNSIEWFKRQKISFADQILTALAVSR) lie on the Cytoplasmic side of the membrane. The chain crosses the membrane as a helical span at residues 56–76 (VGLLWVLLLNWYSTVLNPAFY). At 77 to 100 (SVEVRTTAYNVWAVTGHFSNWLAT) the chain is on the extracellular side. A helical membrane pass occupies residues 101–121 (SLSIFYLLKIANFSNLIFLHL). At 122 to 126 (KRRVK) the chain is on the cytoplasmic side. A helical membrane pass occupies residues 127-147 (SVILVMLLGPLLFLACQLFMI). The Extracellular segment spans residues 148-181 (NMKEIVRTKEYEGNMTWKIKLRSAVYLSDATVTT). Asn-161 carries an N-linked (GlcNAc...) asparagine glycan. Residues 182–202 (LGNLVPFTLTLLCFLLLICSL) form a helical membrane-spanning segment. Residues 203-229 (CKHLKKMQLHGKGSQDPSTKVHIKVLQ) lie on the Cytoplasmic side of the membrane. Residues 230 to 250 (TVISFLLLCAIYFLSIMISVW) form a helical membrane-spanning segment. At 251 to 259 (SFGSLKNKP) the chain is on the extracellular side. A helical transmembrane segment spans residues 260-280 (VFMFCKAMRFSYPSIHPFILI). Over 281–309 (WGNKKLKQTFLSVLRQVRYWVKGEKPSSP) the chain is Cytoplasmic.

This sequence belongs to the G-protein coupled receptor T2R family.

It localises to the membrane. Receptor that may play a role in the perception of bitterness and is gustducin-linked. May play a role in sensing the chemical composition of the gastrointestinal content. The activity of this receptor may stimulate alpha gustducin, mediate PLC-beta-2 activation and lead to the gating of TRPM5. In Pan troglodytes (Chimpanzee), this protein is Taste receptor type 2 member 31 (TAS2R31).